Consider the following 274-residue polypeptide: Tryptase beta-2 (274 aa).

An N-terminal signal peptide occupies residues 1–19 (MLKLLLLLALSPLASLVHA). Residues 20 to 29 (APCPVKQRVG) constitute a propeptide, activation peptide. The 242-residue stretch at 30-271 (IVGGREASES…YLDWIHRYVP (242 aa)) folds into the Peptidase S1 domain. An intrachain disulfide couples Cys-58 to Cys-74. His-73 (charge relay system) is an active-site residue. Tyr-96 carries the post-translational modification Phosphotyrosine. Asn-104 is a glycosylation site (N-linked (GlcNAc...) asparagine). Asp-120 functions as the Charge relay system in the catalytic mechanism. Residue Asn-131 is glycosylated (N-linked (GlcNAc...) asparagine). 3 cysteine pairs are disulfide-bonded: Cys-154–Cys-229, Cys-187–Cys-210, and Cys-219–Cys-247. Residue Ser-223 is the Charge relay system of the active site.

It belongs to the peptidase S1 family. Tryptase subfamily. In terms of assembly, homotetramer. The active tetramer is converted to inactive monomers at neutral and acidic pH in the absence of heparin. Low concentrations of inactive monomers become active monomers at pH 6.0 in the presence of heparin. When the concentration of active monomers is higher, they convert to active monomers and then to active tetramers. These monomers are active and functionally distinct from the tetrameric enzyme. In contrast to the hidden active sites in the tetrameric form, the active site of the monomeric form is accessible for macromolecular proteins and inhibitors, e.g. fibrinogen which is a substrate for the monomeric but not for the tetrameric form. The monomeric form forms a complex with SERPINB6.

It localises to the secreted. It catalyses the reaction Preferential cleavage: Arg-|-Xaa, Lys-|-Xaa, but with more restricted specificity than trypsin.. Its function is as follows. Tryptase is the major neutral protease present in mast cells and is secreted upon the coupled activation-degranulation response of this cell type. Plays a role in innate immunity. The sequence is that of Tryptase beta-2 (Tpsb2) from Rattus norvegicus (Rat).